The sequence spans 301 residues: GTPase Era (301 aa).

An Era-type G domain is found at 4–173 (KAGFVALIGK…LECISKHLIP (170 aa)). Positions 12 to 19 (GKPNAGKS) are G1. 12-19 (GKPNAGKS) is a binding site for GTP. Residues 38 to 42 (NATRK) are G2. The segment at 64–67 (DTPG) is G3. Residues 64–68 (DTPGL) and 122–125 (SKID) contribute to the GTP site. The tract at residues 122–125 (SKID) is G4. Residues 152-154 (LSA) are G5. The KH type-2 domain maps to 204–280 (LSDEIPYESD…FLNLQVIAQK (77 aa)).

Belongs to the TRAFAC class TrmE-Era-EngA-EngB-Septin-like GTPase superfamily. Era GTPase family. Monomer.

The protein resides in the cytoplasm. Its subcellular location is the cell inner membrane. In terms of biological role, an essential GTPase that binds both GDP and GTP, with rapid nucleotide exchange. Plays a role in 16S rRNA processing and 30S ribosomal subunit biogenesis and possibly also in cell cycle regulation and energy metabolism. The polypeptide is GTPase Era (Helicobacter pylori (strain HPAG1)).